The sequence spans 809 residues: Zinc finger CCCH domain-containing protein 24 (809 aa).

Met1 bears the N-acetylmethionine mark. The tract at residues 1-74 is disordered; that stretch reads METSSIEINE…NLESSDTKIT (74 aa). A compositionally biased stretch (polar residues) spans 30–46; it reads ETSSIDELPSSDSNATD. Over residues 51–65 the composition is skewed to basic and acidic residues; sequence VGEKRKRADEDEKTN. A C3H1-type zinc finger spans residues 79-107; that stretch reads WWKTSLCSYFRREASCSHGNECKYAHGEA. S-adenosyl-L-methionine contacts are provided by Gln536 and Glu586. The disordered stretch occupies residues 652-693; that stretch reads EEMTNSEHVADQNLPPSNTQVEELQDNEQKDSSSLEPEKTTK. Basic and acidic residues predominate over residues 678 to 692; the sequence is NEQKDSSSLEPEKTT. Asp704 provides a ligand contact to S-adenosyl-L-methionine. Residue Cys732 is the Nucleophile of the active site.

This sequence belongs to the class I-like SAM-binding methyltransferase superfamily. RNA M5U methyltransferase family.

In Arabidopsis thaliana (Mouse-ear cress), this protein is Zinc finger CCCH domain-containing protein 24.